We begin with the raw amino-acid sequence, 197 residues long: Sec-independent protein translocase protein TatB (197 aa).

A helical transmembrane segment spans residues 1 to 21 (MFDIGFGELLLVMVLGLIVLG). Positions 93–197 (KRGYTETPSP…ASARQPSDSR (105 aa)) are disordered. Basic and acidic residues-rich tracts occupy residues 104–113 (KSDDPKKSGD) and 160–169 (NHNDGRHATS). Positions 180 to 197 (PEQSQPSAASARQPSDSR) are enriched in low complexity.

This sequence belongs to the TatB family. As to quaternary structure, the Tat system comprises two distinct complexes: a TatABC complex, containing multiple copies of TatA, TatB and TatC subunits, and a separate TatA complex, containing only TatA subunits. Substrates initially bind to the TatABC complex, which probably triggers association of the separate TatA complex to form the active translocon.

The protein localises to the cell inner membrane. Part of the twin-arginine translocation (Tat) system that transports large folded proteins containing a characteristic twin-arginine motif in their signal peptide across membranes. Together with TatC, TatB is part of a receptor directly interacting with Tat signal peptides. TatB may form an oligomeric binding site that transiently accommodates folded Tat precursor proteins before their translocation. The protein is Sec-independent protein translocase protein TatB of Pectobacterium atrosepticum (strain SCRI 1043 / ATCC BAA-672) (Erwinia carotovora subsp. atroseptica).